The primary structure comprises 451 residues: Tryptophan--tRNA ligase (451 aa).

ATP is bound by residues 10–12 and 18–19; these read TTT and GN. A 'HIGH' region motif is present at residues 11 to 19; that stretch reads TTGTPHLGN. L-tryptophan is bound at residue Asp143. ATP is bound by residues 155 to 157, Leu195, and 202 to 206; these read GRD and KMSKS. A 'KMSKS' region motif is present at residues 202-206; sequence KMSKS.

It belongs to the class-I aminoacyl-tRNA synthetase family. As to quaternary structure, homodimer.

The protein resides in the cytoplasm. The enzyme catalyses tRNA(Trp) + L-tryptophan + ATP = L-tryptophyl-tRNA(Trp) + AMP + diphosphate + H(+). Catalyzes the attachment of tryptophan to tRNA(Trp). In Bordetella pertussis (strain Tohama I / ATCC BAA-589 / NCTC 13251), this protein is Tryptophan--tRNA ligase.